A 589-amino-acid chain; its full sequence is Zinc finger protein 131 (589 aa).

Residues 34 to 98 (TDITLIVDGH…TYTAKLMIQG (65 aa)) enclose the BTB domain. Positions 137 to 148 (TGKNEAKKRKIA) match the Nuclear localization signal 1 motif. Positions 224–234 (GDRKGQIKEDG) are enriched in basic and acidic residues. Residues 224–247 (GDRKGQIKEDGCPSDPTSKQEHMK) form a disordered region. C2H2-type zinc fingers lie at residues 254-277 (FKCE…NCYH) and 294-316 (HVCQ…LRKH). Residues Lys-255 and Lys-261 each participate in a glycyl lysine isopeptide (Lys-Gly) (interchain with G-Cter in SUMO2) cross-link. Residues 283 to 294 (VSKKQRTGKKIH) carry the Nuclear localization signal 2 motif. The C2H2-type 3; degenerate zinc finger occupies 322-347 (FECPNCHERFARNSTLKCHLTACQTG). C2H2-type zinc fingers lie at residues 358 to 380 (YECQ…LVIH) and 386 to 409 (NHCT…SDAH). A compositionally biased stretch (basic and acidic residues) spans 539 to 583 (NQEERESSQADAAEAAREDHEDAEDLETKPTVDSEAEKAENEDRT). Residues 539 to 589 (NQEERESSQADAAEAAREDHEDAEDLETKPTVDSEAEKAENEDRTAMPVLE) are disordered. Lys-567 is covalently cross-linked (Glycyl lysine isopeptide (Lys-Gly) (interchain with G-Cter in SUMO)).

The protein belongs to the krueppel C2H2-type zinc-finger protein family. Monosumoylated at Lys-567 by CBX4 and UHRF2. Sumoylation may potentiate ZNF131 inhibition of estrogen signaling. Sumoylation does not interfere with ubiquitination. Post-translationally, ubiquitinated.

The protein resides in the nucleus. In terms of biological role, may be involved in transcriptional regulation as a repressor of ESR1/ER-alpha signaling. Plays a role during development and organogenesis as well as in the function of the adult central nervous system. This is Zinc finger protein 131 (ZNF131) from Pongo abelii (Sumatran orangutan).